Consider the following 378-residue polypeptide: 8-demethyl-8-alpha-L-rhamnosyl tetracenomycin-C 2'-O-methyltransferase (378 aa).

Residues 195 to 201, Ser-210, Asp-227, 245 to 246, and Asp-268 each bind S-adenosyl-L-methionine; these read EIGVGGY and DQ. Asp-268 serves as a coordination point for Mg(2+). Catalysis depends on His-271, which acts as the Proton acceptor. The Mg(2+) site is built by Glu-296 and Asp-297.

The protein belongs to the methyltransferase OleY/MycE family. Mg(2+) is required as a cofactor.

The catalysed reaction is 8-demethyl-8-alpha-L-rhamnosyl-tetracenomycin C + S-adenosyl-L-methionine = 8-demethyl-8-(2-O-methyl-alpha-L-rhamnosyl)-tetracenomycin C + S-adenosyl-L-homocysteine + H(+). Its pathway is antibiotic biosynthesis. O-methyltransferase involved in the biosynthesis of the permethylated L-rhamnose moiety of elloramycin, an antitumor polyketide. Mediates the methylation of the hydroxy groups at the 2'-position after the sugar moiety has been attached to the aglycon. The polypeptide is 8-demethyl-8-alpha-L-rhamnosyl tetracenomycin-C 2'-O-methyltransferase (Streptomyces olivaceus).